We begin with the raw amino-acid sequence, 492 residues long: Cysteine--tRNA ligase (492 aa).

Residue Cys-27 coordinates Zn(2+). The short motif at 29–39 (VTVYDLCHLGH) is the 'HIGH' region element. Cys-211, His-236, and Glu-240 together coordinate Zn(2+). A 'KMSKS' region motif is present at residues 268 to 272 (KMSKS). Lys-271 is a binding site for ATP.

The protein belongs to the class-I aminoacyl-tRNA synthetase family. Monomer. Requires Zn(2+) as cofactor.

Its subcellular location is the cytoplasm. The enzyme catalyses tRNA(Cys) + L-cysteine + ATP = L-cysteinyl-tRNA(Cys) + AMP + diphosphate. The polypeptide is Cysteine--tRNA ligase (Prochlorococcus marinus (strain MIT 9515)).